The following is a 71-amino-acid chain: Small ribosomal subunit protein bS21 (71 aa).

It belongs to the bacterial ribosomal protein bS21 family.

In Acidithiobacillus ferrooxidans (strain ATCC 23270 / DSM 14882 / CIP 104768 / NCIMB 8455) (Ferrobacillus ferrooxidans (strain ATCC 23270)), this protein is Small ribosomal subunit protein bS21.